The following is a 601-amino-acid chain: Elongation factor 4 (601 aa).

One can recognise a tr-type G domain in the interval 7–189 (ELIRNFSIIA…ALVTRLPPPK (183 aa)). Residues 19–24 (DHGKST) and 136–139 (NKID) contribute to the GTP site.

The protein belongs to the TRAFAC class translation factor GTPase superfamily. Classic translation factor GTPase family. LepA subfamily.

Its subcellular location is the cell inner membrane. The enzyme catalyses GTP + H2O = GDP + phosphate + H(+). Functionally, required for accurate and efficient protein synthesis under certain stress conditions. May act as a fidelity factor of the translation reaction, by catalyzing a one-codon backward translocation of tRNAs on improperly translocated ribosomes. Back-translocation proceeds from a post-translocation (POST) complex to a pre-translocation (PRE) complex, thus giving elongation factor G a second chance to translocate the tRNAs correctly. Binds to ribosomes in a GTP-dependent manner. This chain is Elongation factor 4, found in Acidiphilium cryptum (strain JF-5).